The primary structure comprises 311 residues: Protoheme IX farnesyltransferase (311 aa).

9 consecutive transmembrane segments (helical) span residues 38–58, 62–82, 113–133, 134–154, 162–182, 188–208, 230–250, 251–271, and 286–306; these read IKVV…APDM, YFVQ…AAVI, LIFS…AANW, LTAQ…TMFL, IVIG…SETG, PWIL…ALAI, FTKT…FLPF, LIHM…IIFI, and ALNL…ALFA.

It belongs to the UbiA prenyltransferase family. Protoheme IX farnesyltransferase subfamily.

The protein resides in the cell inner membrane. The enzyme catalyses heme b + (2E,6E)-farnesyl diphosphate + H2O = Fe(II)-heme o + diphosphate. The protein operates within porphyrin-containing compound metabolism; heme O biosynthesis; heme O from protoheme: step 1/1. Functionally, converts heme B (protoheme IX) to heme O by substitution of the vinyl group on carbon 2 of heme B porphyrin ring with a hydroxyethyl farnesyl side group. This Psychromonas ingrahamii (strain DSM 17664 / CCUG 51855 / 37) protein is Protoheme IX farnesyltransferase.